The following is a 445-amino-acid chain: Protein phosphatase 2C 53 (445 aa).

A PPM-type phosphatase domain is found at 124-435; sequence LWGLESICGR…DNITVVVIDL (312 aa). Mn(2+) contacts are provided by aspartate 180, glycine 181, aspartate 362, and aspartate 426.

This sequence belongs to the PP2C family. In terms of assembly, interacts with PYL10, SAPK8 and SAPK10. Binding to PYL10 is dependent on the presence of abscisic acid (ABA). Interacts with PYL3, PYL5, PYL9 and PYL10. Binding to PYL9 and PYL10 is dependent on the presence of ABA. The cofactor is Mg(2+). Mn(2+) is required as a cofactor. Expressed in leaf blades, leaf sheaths and lamina joints. Expressed at low levels in roots, stems, flowers and panicles.

The protein resides in the cytoplasm. Its subcellular location is the cytosol. The protein localises to the nucleus. It carries out the reaction O-phospho-L-seryl-[protein] + H2O = L-seryl-[protein] + phosphate. The enzyme catalyses O-phospho-L-threonyl-[protein] + H2O = L-threonyl-[protein] + phosphate. Repressed by abscisic acid-bound PYL1. In terms of biological role, protein phosphatase that acts as a negative regulator of abscisic acid (ABA) signaling. Involved in the regulation of root architecture development and drought resistance. Can dephosphorylate SAPK8 and SAPK10 in vitro. Together with PYL10, SAPK8 and SAPK10, may form an ABA signaling module involved in stress response. This is Protein phosphatase 2C 53 from Oryza sativa subsp. japonica (Rice).